The following is a 337-amino-acid chain: MTQENEIKRPIQDLEHEPIKPLDNSEKGSKVSQALETVTTTAEKVQRQPVIAHLIRATERFNDRLGNQFGAAITYFSFLSMIPILMVSFAAGGFVLASHPMLLQDIFDKILQNISDPTLAATLKNTINTAVQQRTTVGLVGLAVALYSGINWMGNLREAIRAQSRDVWERSPQDQEKFWVKYLRDFISLIGLLIALIVTLSITSVAGSAQQMIISALHLNSIEWLKPTWRLIGLAISIFANYLLFFWIFWRLPRHRPRKKALIRGTFLAAIGFEVIKIVMTYTLPSLMKSPSGAAFGSVLGLMAFFYFFARLTLFCAAWIATAEYKDDPRMPGKTQP.

The span at 1-29 shows a compositional bias: basic and acidic residues; it reads MTQENEIKRPIQDLEHEPIKPLDNSEKGS. A disordered region spans residues 1–31; it reads MTQENEIKRPIQDLEHEPIKPLDNSEKGSKV. At 1–74 the chain is on the cytoplasmic side; that stretch reads MTQENEIKRP…LGNQFGAAIT (74 aa). A helical transmembrane segment spans residues 75 to 97; sequence YFSFLSMIPILMVSFAAGGFVLA. Over 98–133 the chain is Periplasmic; the sequence is SHPMLLQDIFDKILQNISDPTLAATLKNTINTAVQQ. Residues 134–156 traverse the membrane as a helical segment; it reads RTTVGLVGLAVALYSGINWMGNL. Topologically, residues 157–185 are cytoplasmic; sequence REAIRAQSRDVWERSPQDQEKFWVKYLRD. A helical membrane pass occupies residues 186-208; it reads FISLIGLLIALIVTLSITSVAGS. The Periplasmic portion of the chain corresponds to 209 to 227; the sequence is AQQMIISALHLNSIEWLKP. The helical transmembrane segment at 228-250 threads the bilayer; that stretch reads TWRLIGLAISIFANYLLFFWIFW. At 251–261 the chain is on the cytoplasmic side; that stretch reads RLPRHRPRKKA. A helical membrane pass occupies residues 262–284; it reads LIRGTFLAAIGFEVIKIVMTYTL. At 285–298 the chain is on the periplasmic side; it reads PSLMKSPSGAAFGS. Residues 299 to 321 traverse the membrane as a helical segment; sequence VLGLMAFFYFFARLTLFCAAWIA. Topologically, residues 322 to 337 are cytoplasmic; the sequence is TAEYKDDPRMPGKTQP.

Its subcellular location is the cell inner membrane. The polypeptide is Inner membrane protein YhjD (yhjD) (Escherichia coli (strain K12)).